We begin with the raw amino-acid sequence, 384 residues long: Lipid-A-disaccharide synthase (384 aa).

Belongs to the LpxB family.

It catalyses the reaction a lipid X + a UDP-2-N,3-O-bis[(3R)-3-hydroxyacyl]-alpha-D-glucosamine = a lipid A disaccharide + UDP + H(+). It participates in bacterial outer membrane biogenesis; LPS lipid A biosynthesis. Functionally, condensation of UDP-2,3-diacylglucosamine and 2,3-diacylglucosamine-1-phosphate to form lipid A disaccharide, a precursor of lipid A, a phosphorylated glycolipid that anchors the lipopolysaccharide to the outer membrane of the cell. The chain is Lipid-A-disaccharide synthase from Geobacter sulfurreducens (strain ATCC 51573 / DSM 12127 / PCA).